The chain runs to 454 residues: ADP-specific phosphofructokinase (454 aa).

In terms of domain architecture, ADPK spans 1–452 (MIDEVRELGI…FLSYLSLLRR (452 aa)). Positions 263, 293, and 436 each coordinate Mg(2+). D436 serves as the catalytic Proton acceptor.

Belongs to the carbohydrate kinase PfkC family. As to quaternary structure, homotetramer. The cofactor is Mg(2+).

The protein resides in the cytoplasm. The catalysed reaction is beta-D-fructose 6-phosphate + ADP = beta-D-fructose 1,6-bisphosphate + AMP + H(+). It participates in carbohydrate degradation; glycolysis. Its activity is regulated as follows. Inhibited by AMP and ATP. Catalyzes the phosphorylation of fructose 6-phosphate to fructose 1,6-bisphosphate using ADP as the phosphate donor. As a phosphoryl group donor, ADP can be replaced by GDP, ATP, and GTP to a limited extent. This is ADP-specific phosphofructokinase (pfkC) from Pyrococcus furiosus (strain ATCC 43587 / DSM 3638 / JCM 8422 / Vc1).